Here is a 208-residue protein sequence, read N- to C-terminus: Ribosomal RNA large subunit methyltransferase E (208 aa).

Gly63, Trp65, Asp83, Asp99, and Asp124 together coordinate S-adenosyl-L-methionine. The active-site Proton acceptor is Lys164.

The protein belongs to the class I-like SAM-binding methyltransferase superfamily. RNA methyltransferase RlmE family.

It localises to the cytoplasm. It carries out the reaction uridine(2552) in 23S rRNA + S-adenosyl-L-methionine = 2'-O-methyluridine(2552) in 23S rRNA + S-adenosyl-L-homocysteine + H(+). In terms of biological role, specifically methylates the uridine in position 2552 of 23S rRNA at the 2'-O position of the ribose in the fully assembled 50S ribosomal subunit. This is Ribosomal RNA large subunit methyltransferase E from Salmonella arizonae (strain ATCC BAA-731 / CDC346-86 / RSK2980).